The chain runs to 181 residues: Adenine phosphoribosyltransferase (181 aa).

It belongs to the purine/pyrimidine phosphoribosyltransferase family. As to quaternary structure, homodimer.

It localises to the cytoplasm. The catalysed reaction is AMP + diphosphate = 5-phospho-alpha-D-ribose 1-diphosphate + adenine. It participates in purine metabolism; AMP biosynthesis via salvage pathway; AMP from adenine: step 1/1. Functionally, catalyzes a salvage reaction resulting in the formation of AMP, that is energically less costly than de novo synthesis. This chain is Adenine phosphoribosyltransferase, found in Brucella anthropi (strain ATCC 49188 / DSM 6882 / CCUG 24695 / JCM 21032 / LMG 3331 / NBRC 15819 / NCTC 12168 / Alc 37) (Ochrobactrum anthropi).